The primary structure comprises 322 residues: Breast cancer metastasis-suppressor 1-like protein (322 aa).

Positions 1–16 (MPVHSREKKESNHNDM) are enriched in basic and acidic residues. The interval 1-56 (MPVHSREKKESNHNDMEVDYPENEGTSSEEDDSDSSSGSEEGDSSEMDDEDCERRR) is disordered. Positions 17-51 (EVDYPENEGTSSEEDDSDSSSGSEEGDSSEMDDED) are enriched in acidic residues. 2 coiled-coil regions span residues 50 to 82 (EDCE…KERL) and 147 to 178 (EKLL…ITSE).

It belongs to the BRMS1 family.

Its subcellular location is the nucleus. In terms of biological role, involved in the histone deacetylase (HDAC1)-dependent transcriptional repression activity. The chain is Breast cancer metastasis-suppressor 1-like protein (brms1l) from Xenopus tropicalis (Western clawed frog).